Reading from the N-terminus, the 676-residue chain is Methionine--tRNA ligase (676 aa).

A 'HIGH' region motif is present at residues 15–25 (PYANGSIHLGH). Positions 146, 149, 159, and 162 each coordinate Zn(2+). A 'KMSKS' region motif is present at residues 332–336 (KMSKS). K335 is a binding site for ATP. The tRNA-binding domain occupies 574–676 (DFAKVDMRIA…SGAQPGQQVK (103 aa)).

The protein belongs to the class-I aminoacyl-tRNA synthetase family. MetG type 1 subfamily. As to quaternary structure, homodimer. It depends on Zn(2+) as a cofactor.

Its subcellular location is the cytoplasm. The enzyme catalyses tRNA(Met) + L-methionine + ATP = L-methionyl-tRNA(Met) + AMP + diphosphate. Its function is as follows. Is required not only for elongation of protein synthesis but also for the initiation of all mRNA translation through initiator tRNA(fMet) aminoacylation. The polypeptide is Methionine--tRNA ligase (Erwinia tasmaniensis (strain DSM 17950 / CFBP 7177 / CIP 109463 / NCPPB 4357 / Et1/99)).